Here is a 908-residue protein sequence, read N- to C-terminus: Probable disease resistance RPP8-like protein 4 (908 aa).

A coiled-coil region spans residues 15–57; sequence DLLSRESERLQGIDEQLDGLKRQLRSLQSLLKDADAKKHGSDR. An NB-ARC domain is found at 146–459; that stretch reads RQRVQREIRQ…AEGIYDGSTI (314 aa). 192-199 lines the ATP pocket; it reads GMGGIGKT. LRR repeat units lie at residues 575-599, 600-623, and 842-867; these read LTLL…SIGG, LIHL…MRNL, and MPCL…KYIT.

The protein belongs to the disease resistance NB-LRR family. RPP8/HRT subfamily.

Potential disease resistance protein. This is Probable disease resistance RPP8-like protein 4 (RPP8L4) from Arabidopsis thaliana (Mouse-ear cress).